We begin with the raw amino-acid sequence, 205 residues long: LexA repressor (205 aa).

Residues 28 to 48 (RAEIAASLGFRSPNAAEEHLK) constitute a DNA-binding region (H-T-H motif). Active-site for autocatalytic cleavage activity residues include Ser122 and Lys159.

This sequence belongs to the peptidase S24 family. In terms of assembly, homodimer.

The enzyme catalyses Hydrolysis of Ala-|-Gly bond in repressor LexA.. Functionally, represses a number of genes involved in the response to DNA damage (SOS response), including recA and lexA. Binds to the 16 bp palindromic sequence 5'-CTGTATATATATACAG-3'. In the presence of single-stranded DNA, RecA interacts with LexA causing an autocatalytic cleavage which disrupts the DNA-binding part of LexA, leading to derepression of the SOS regulon and eventually DNA repair. In Providencia rettgeri, this protein is LexA repressor.